The chain runs to 207 residues: Thiamine-phosphate synthase (207 aa).

Residues 37 to 41 and Asn-69 contribute to the 4-amino-2-methyl-5-(diphosphooxymethyl)pyrimidine site; that span reads QYRHK. Mg(2+)-binding residues include Asp-70 and Asp-89. Residues Ser-108 and Lys-138 each coordinate 4-amino-2-methyl-5-(diphosphooxymethyl)pyrimidine. 2-[(2R,5Z)-2-carboxy-4-methylthiazol-5(2H)-ylidene]ethyl phosphate is bound by residues Gly-165 and 185–186; that span reads IS.

It belongs to the thiamine-phosphate synthase family. Mg(2+) is required as a cofactor.

It catalyses the reaction 2-[(2R,5Z)-2-carboxy-4-methylthiazol-5(2H)-ylidene]ethyl phosphate + 4-amino-2-methyl-5-(diphosphooxymethyl)pyrimidine + 2 H(+) = thiamine phosphate + CO2 + diphosphate. The enzyme catalyses 2-(2-carboxy-4-methylthiazol-5-yl)ethyl phosphate + 4-amino-2-methyl-5-(diphosphooxymethyl)pyrimidine + 2 H(+) = thiamine phosphate + CO2 + diphosphate. The catalysed reaction is 4-methyl-5-(2-phosphooxyethyl)-thiazole + 4-amino-2-methyl-5-(diphosphooxymethyl)pyrimidine + H(+) = thiamine phosphate + diphosphate. Its pathway is cofactor biosynthesis; thiamine diphosphate biosynthesis; thiamine phosphate from 4-amino-2-methyl-5-diphosphomethylpyrimidine and 4-methyl-5-(2-phosphoethyl)-thiazole: step 1/1. In terms of biological role, condenses 4-methyl-5-(beta-hydroxyethyl)thiazole monophosphate (THZ-P) and 2-methyl-4-amino-5-hydroxymethyl pyrimidine pyrophosphate (HMP-PP) to form thiamine monophosphate (TMP). The polypeptide is Thiamine-phosphate synthase (Janthinobacterium sp. (strain Marseille) (Minibacterium massiliensis)).